A 34-amino-acid chain; its full sequence is Cuticle protein 9 (34 aa).

This is Cuticle protein 9 from Blaberus craniifer (Death's head cockroach).